A 519-amino-acid polypeptide reads, in one-letter code: Acetylcholine receptor subunit gamma (519 aa).

The signal sequence occupies residues 1 to 22; that stretch reads MCGGQRPLFLLPLLAVCLGAKG. Residues 23–240 lie on the Extracellular side of the membrane; the sequence is RNQEERLLGD…VVFYLLIQRK (218 aa). N-linked (GlcNAc...) asparagine glycans are attached at residues N52 and N163. C150 and C164 form a disulfide bridge. A run of 3 helical transmembrane segments spans residues 241-265, 274-292, and 308-329; these read PLFYVINIIAPCVLISSVAILIYFL, CTVAINVLLAQTVFLFLVA, and YLTFLLVVTILIVVNAVVVLNV. Topologically, residues 330–476 are cytoplasmic; that stretch reads SLRSPHTHSM…WFLVGRVLDR (147 aa). The helical transmembrane segment at 477–497 threads the bilayer; the sequence is VCFLAMLSLFVCGTAGIFLMA.

Belongs to the ligand-gated ion channel (TC 1.A.9) family. Acetylcholine receptor (TC 1.A.9.1) subfamily. Gamma/CHRNG sub-subfamily. As to quaternary structure, pentamer of two alpha chains, and one each of the beta, delta, and gamma (in immature muscle) or epsilon (in mature muscle) chains.

Its subcellular location is the postsynaptic cell membrane. The protein resides in the cell membrane. It catalyses the reaction K(+)(in) = K(+)(out). The enzyme catalyses Na(+)(in) = Na(+)(out). After binding acetylcholine, the AChR responds by an extensive change in conformation that affects all subunits and leads to opening of an ion-conducting channel across the plasma membrane. The sequence is that of Acetylcholine receptor subunit gamma (CHRNG) from Bos taurus (Bovine).